A 289-amino-acid polypeptide reads, in one-letter code: Acetyl-coenzyme A carboxylase carboxyl transferase subunit beta (289 aa).

In terms of domain architecture, CoA carboxyltransferase N-terminal spans 36 to 289 (MWLRCPHCHQ…LLKTGSVANE (254 aa)). Positions 40, 43, 58, and 61 each coordinate Zn(2+). Residues 40 to 61 (CPHCHQLLFAKQLTQYAVCPNC) form a C4-type zinc finger.

This sequence belongs to the AccD/PCCB family. As to quaternary structure, acetyl-CoA carboxylase is a heterohexamer composed of biotin carboxyl carrier protein (AccB), biotin carboxylase (AccC) and two subunits each of ACCase subunit alpha (AccA) and ACCase subunit beta (AccD). Requires Zn(2+) as cofactor.

Its subcellular location is the cytoplasm. It carries out the reaction N(6)-carboxybiotinyl-L-lysyl-[protein] + acetyl-CoA = N(6)-biotinyl-L-lysyl-[protein] + malonyl-CoA. It functions in the pathway lipid metabolism; malonyl-CoA biosynthesis; malonyl-CoA from acetyl-CoA: step 1/1. In terms of biological role, component of the acetyl coenzyme A carboxylase (ACC) complex. Biotin carboxylase (BC) catalyzes the carboxylation of biotin on its carrier protein (BCCP) and then the CO(2) group is transferred by the transcarboxylase to acetyl-CoA to form malonyl-CoA. The protein is Acetyl-coenzyme A carboxylase carboxyl transferase subunit beta of Limosilactobacillus reuteri subsp. reuteri (strain JCM 1112) (Lactobacillus reuteri).